The following is a 546-amino-acid chain: 2-isopropylmalate synthase (546 aa).

Positions 8–271 (ILIFDTTLRD…NSFFKRNPDS (264 aa)) constitute a Pyruvate carboxyltransferase domain. Aspartate 17, histidine 208, histidine 210, and asparagine 244 together coordinate Mn(2+). Residues 408–546 (QLSLVQVSCG…TNTFLSNNAN (139 aa)) are regulatory domain.

The protein belongs to the alpha-IPM synthase/homocitrate synthase family. LeuA type 1 subfamily. Homodimer. Requires Mn(2+) as cofactor.

It is found in the cytoplasm. The enzyme catalyses 3-methyl-2-oxobutanoate + acetyl-CoA + H2O = (2S)-2-isopropylmalate + CoA + H(+). The protein operates within amino-acid biosynthesis; L-leucine biosynthesis; L-leucine from 3-methyl-2-oxobutanoate: step 1/4. Functionally, catalyzes the condensation of the acetyl group of acetyl-CoA with 3-methyl-2-oxobutanoate (2-ketoisovalerate) to form 3-carboxy-3-hydroxy-4-methylpentanoate (2-isopropylmalate). The polypeptide is 2-isopropylmalate synthase (Prochlorococcus marinus (strain AS9601)).